Reading from the N-terminus, the 484-residue chain is tRNA sulfurtransferase (484 aa).

Residues 63–167 (QAFGERLACI…GDKLYMVTKR (105 aa)) form the THUMP domain. ATP contacts are provided by residues 185–186 (LI), lysine 267, glycine 289, and glutamine 298. Cysteines 346 and 458 form a disulfide. Positions 406–484 (IDTNEVVIDI…GYHNVKVYRP (79 aa)) constitute a Rhodanese domain. The Cysteine persulfide intermediate role is filled by cysteine 458.

It belongs to the ThiI family.

It localises to the cytoplasm. It carries out the reaction [ThiI sulfur-carrier protein]-S-sulfanyl-L-cysteine + a uridine in tRNA + 2 reduced [2Fe-2S]-[ferredoxin] + ATP + H(+) = [ThiI sulfur-carrier protein]-L-cysteine + a 4-thiouridine in tRNA + 2 oxidized [2Fe-2S]-[ferredoxin] + AMP + diphosphate. It catalyses the reaction [ThiS sulfur-carrier protein]-C-terminal Gly-Gly-AMP + S-sulfanyl-L-cysteinyl-[cysteine desulfurase] + AH2 = [ThiS sulfur-carrier protein]-C-terminal-Gly-aminoethanethioate + L-cysteinyl-[cysteine desulfurase] + A + AMP + 2 H(+). Its pathway is cofactor biosynthesis; thiamine diphosphate biosynthesis. Functionally, catalyzes the ATP-dependent transfer of a sulfur to tRNA to produce 4-thiouridine in position 8 of tRNAs, which functions as a near-UV photosensor. Also catalyzes the transfer of sulfur to the sulfur carrier protein ThiS, forming ThiS-thiocarboxylate. This is a step in the synthesis of thiazole, in the thiamine biosynthesis pathway. The sulfur is donated as persulfide by IscS. This Shewanella oneidensis (strain ATCC 700550 / JCM 31522 / CIP 106686 / LMG 19005 / NCIMB 14063 / MR-1) protein is tRNA sulfurtransferase.